Reading from the N-terminus, the 422-residue chain is UDP-N-acetylglucosamine 1-carboxyvinyltransferase (422 aa).

22–23 contributes to the phosphoenolpyruvate binding site; the sequence is KN. R93 lines the UDP-N-acetyl-alpha-D-glucosamine pocket. C117 (proton donor) is an active-site residue. 2-(S-cysteinyl)pyruvic acid O-phosphothioketal is present on C117. Residues 122-126, D309, and I331 each bind UDP-N-acetyl-alpha-D-glucosamine; that span reads RPVDQ.

It belongs to the EPSP synthase family. MurA subfamily.

It localises to the cytoplasm. The enzyme catalyses phosphoenolpyruvate + UDP-N-acetyl-alpha-D-glucosamine = UDP-N-acetyl-3-O-(1-carboxyvinyl)-alpha-D-glucosamine + phosphate. It participates in cell wall biogenesis; peptidoglycan biosynthesis. Its function is as follows. Cell wall formation. Adds enolpyruvyl to UDP-N-acetylglucosamine. The sequence is that of UDP-N-acetylglucosamine 1-carboxyvinyltransferase from Delftia acidovorans (strain DSM 14801 / SPH-1).